The primary structure comprises 490 residues: Betaine aldehyde dehydrogenase (490 aa).

Asn93 is a K(+) binding site. Residue 150–152 (GAW) coordinates NAD(+). Lys162 acts as the Charge relay system in catalysis. 176-179 (KPSE) is an NAD(+) binding site. Val180 provides a ligand contact to K(+). 230 to 233 (GTAT) contacts NAD(+). Leu246 contributes to the K(+) binding site. The active-site Proton acceptor is Glu252. NAD(+)-binding residues include Gly254, Cys286, and Glu387. The Nucleophile role is filled by Cys286. Position 286 is a cysteine sulfenic acid (-SOH) (Cys286). 2 residues coordinate K(+): Lys457 and Gly460. The Charge relay system role is filled by Glu464.

The protein belongs to the aldehyde dehydrogenase family. As to quaternary structure, dimer of dimers. Requires K(+) as cofactor.

It carries out the reaction betaine aldehyde + NAD(+) + H2O = glycine betaine + NADH + 2 H(+). The protein operates within amine and polyamine biosynthesis; betaine biosynthesis via choline pathway; betaine from betaine aldehyde: step 1/1. Involved in the biosynthesis of the osmoprotectant glycine betaine. Catalyzes the irreversible oxidation of betaine aldehyde to the corresponding acid. This chain is Betaine aldehyde dehydrogenase, found in Xanthomonas euvesicatoria pv. vesicatoria (strain 85-10) (Xanthomonas campestris pv. vesicatoria).